The following is a 421-amino-acid chain: Glutamyl-tRNA reductase (421 aa).

Residues 49–52, Ser-109, 114–116, and Gln-120 contribute to the substrate site; these read TCNR and EAQ. The active-site Nucleophile is the Cys-50. 189–194 contacts NADP(+); the sequence is GAGEMC.

Belongs to the glutamyl-tRNA reductase family. Homodimer.

It catalyses the reaction (S)-4-amino-5-oxopentanoate + tRNA(Glu) + NADP(+) = L-glutamyl-tRNA(Glu) + NADPH + H(+). Its pathway is porphyrin-containing compound metabolism; protoporphyrin-IX biosynthesis; 5-aminolevulinate from L-glutamyl-tRNA(Glu): step 1/2. In terms of biological role, catalyzes the NADPH-dependent reduction of glutamyl-tRNA(Glu) to glutamate 1-semialdehyde (GSA). The chain is Glutamyl-tRNA reductase from Magnetococcus marinus (strain ATCC BAA-1437 / JCM 17883 / MC-1).